A 277-amino-acid chain; its full sequence is Uridine-cytidine kinase 1 (277 aa).

A disordered region spans residues 1–30; that stretch reads MASAGGEDCESPAPEADRPHQRPFLIGVSG. ATP is bound at residue 30–38; sequence GGTASGKST. D65 is an active-site residue. 6 residues coordinate substrate: D87, Y115, H120, R169, R178, and Q186. D215 provides a ligand contact to ATP. Positions 247–277 are disordered; the sequence is SYKRTFSEPGDHPGMLTSGKRSHLESSSRPH. Phosphothreonine is present on T251. Residue S253 is modified to Phosphoserine. Positions 268–277 are enriched in basic and acidic residues; the sequence is SHLESSSRPH.

The protein belongs to the uridine kinase family. Ubiquitous.

The enzyme catalyses uridine + ATP = UMP + ADP + H(+). It catalyses the reaction cytidine + ATP = CMP + ADP + H(+). It functions in the pathway pyrimidine metabolism; CTP biosynthesis via salvage pathway; CTP from cytidine: step 1/3. The protein operates within pyrimidine metabolism; UMP biosynthesis via salvage pathway; UMP from uridine: step 1/1. Phosphorylates uridine and cytidine to uridine monophosphate and cytidine monophosphate. Does not phosphorylate deoxyribonucleosides or purine ribonucleosides. Can use ATP or GTP as a phosphate donor. Can also phosphorylate cytidine and uridine nucleoside analogs such as 6-azauridine, 5-fluorouridine, 4-thiouridine, 5-bromouridine, N(4)-acetylcytidine, N(4)-benzoylcytidine, 5-fluorocytidine, 2-thiocytidine, 5-methylcytidine, and N(4)-anisoylcytidine. This Homo sapiens (Human) protein is Uridine-cytidine kinase 1 (UCK1).